We begin with the raw amino-acid sequence, 180 residues long: MKMVIVLVVWLALSAASASAMQMPCPCAGLQGLYGAGAGLTTMMGAGGLYPYAEYLRQPQCSPLAAAPYYAGCGQTSAMYQPLRQQCCQQQMRMMDVQSVAQQLQMMMQLERAATASSSLYEPALMQQQQQLLAAQGLNPMAMMMAQNMPAMGGLYQYQYQLPSYRTNPCGVSAAIPPYY.

A signal peptide spans 1-19; sequence MKMVIVLVVWLALSAASAS.

The protein localises to the vacuole. It localises to the aleurone grain. In terms of biological role, zeins are major seed storage proteins. This chain is Zein-beta, found in Zea mays (Maize).